The following is a 335-amino-acid chain: Succinylglutamate desuccinylase (335 aa).

Zn(2+)-binding residues include histidine 59, glutamate 62, and histidine 151. Glutamate 215 is an active-site residue.

The protein belongs to the AspA/AstE family. Succinylglutamate desuccinylase subfamily. The cofactor is Zn(2+).

It carries out the reaction N-succinyl-L-glutamate + H2O = L-glutamate + succinate. Its pathway is amino-acid degradation; L-arginine degradation via AST pathway; L-glutamate and succinate from L-arginine: step 5/5. Functionally, transforms N(2)-succinylglutamate into succinate and glutamate. The chain is Succinylglutamate desuccinylase from Pseudomonas putida (strain GB-1).